The primary structure comprises 331 residues: 3-dehydroquinate synthase homolog (331 aa).

Belongs to the archaeal-type DHQ synthase family.

The protein is 3-dehydroquinate synthase homolog of Aquifex aeolicus (strain VF5).